A 373-amino-acid polypeptide reads, in one-letter code: Probable protein phosphatase 2C 73 (373 aa).

Positions 61 to 354 constitute a PPM-type phosphatase domain; sequence LASLFSKRGE…DDMSVVCLFL (294 aa). The Mn(2+) site is built by Asp97, Gly98, Asp299, and Asp345.

The protein belongs to the PP2C family. It depends on Mg(2+) as a cofactor. Mn(2+) is required as a cofactor.

The catalysed reaction is O-phospho-L-seryl-[protein] + H2O = L-seryl-[protein] + phosphate. It catalyses the reaction O-phospho-L-threonyl-[protein] + H2O = L-threonyl-[protein] + phosphate. The sequence is that of Probable protein phosphatase 2C 73 (PPC6-7) from Arabidopsis thaliana (Mouse-ear cress).